Here is a 106-residue protein sequence, read N- to C-terminus: Pyrimidine/purine nucleoside phosphorylase (106 aa).

The protein belongs to the nucleoside phosphorylase PpnP family.

The enzyme catalyses a purine D-ribonucleoside + phosphate = a purine nucleobase + alpha-D-ribose 1-phosphate. The catalysed reaction is adenosine + phosphate = alpha-D-ribose 1-phosphate + adenine. It carries out the reaction cytidine + phosphate = cytosine + alpha-D-ribose 1-phosphate. It catalyses the reaction guanosine + phosphate = alpha-D-ribose 1-phosphate + guanine. The enzyme catalyses inosine + phosphate = alpha-D-ribose 1-phosphate + hypoxanthine. The catalysed reaction is thymidine + phosphate = 2-deoxy-alpha-D-ribose 1-phosphate + thymine. It carries out the reaction uridine + phosphate = alpha-D-ribose 1-phosphate + uracil. It catalyses the reaction xanthosine + phosphate = alpha-D-ribose 1-phosphate + xanthine. In terms of biological role, catalyzes the phosphorolysis of diverse nucleosides, yielding D-ribose 1-phosphate and the respective free bases. Can use uridine, adenosine, guanosine, cytidine, thymidine, inosine and xanthosine as substrates. Also catalyzes the reverse reactions. The sequence is that of Pyrimidine/purine nucleoside phosphorylase from Leptospira interrogans serogroup Icterohaemorrhagiae serovar copenhageni (strain Fiocruz L1-130).